The following is a 163-amino-acid chain: Putative NOL1/NOP2/Sun domain family member 5B (163 aa).

The Nucleophile role is filled by Cys-93.

It belongs to the class I-like SAM-binding methyltransferase superfamily. RsmB/NOP family. As to expression, ubiquitous.

This Homo sapiens (Human) protein is Putative NOL1/NOP2/Sun domain family member 5B (NSUN5P1).